The sequence spans 75 residues: UPF0291 protein LMOf2365_1322 (75 aa).

A disordered region spans residues aspartate 56 to histidine 75. Residues histidine 65–histidine 75 show a composition bias toward basic residues.

The protein belongs to the UPF0291 family.

It localises to the cytoplasm. The chain is UPF0291 protein LMOf2365_1322 from Listeria monocytogenes serotype 4b (strain F2365).